The following is a 637-amino-acid chain: Threonine--tRNA ligase (637 aa).

Residues 1-61 (MLNITLPDGS…TEDSSVQIIT (61 aa)) enclose the TGS domain. Positions 242–533 (DHRKLGKQLD…LIENHAGSFP (292 aa)) are catalytic. Residues C333, H384, and H510 each contribute to the Zn(2+) site.

It belongs to the class-II aminoacyl-tRNA synthetase family. Homodimer. Zn(2+) serves as cofactor.

The protein resides in the cytoplasm. It catalyses the reaction tRNA(Thr) + L-threonine + ATP = L-threonyl-tRNA(Thr) + AMP + diphosphate + H(+). Functionally, catalyzes the attachment of threonine to tRNA(Thr) in a two-step reaction: L-threonine is first activated by ATP to form Thr-AMP and then transferred to the acceptor end of tRNA(Thr). Also edits incorrectly charged L-seryl-tRNA(Thr). The sequence is that of Threonine--tRNA ligase from Neisseria meningitidis serogroup C (strain 053442).